The chain runs to 108 residues: UPF0060 membrane protein Sca_1835 (108 aa).

The next 4 helical transmembrane spans lie at Ile-5–Trp-25, Phe-34–Phe-54, Val-60–Asp-80, and Pro-84–Leu-104.

This sequence belongs to the UPF0060 family.

It localises to the cell membrane. This chain is UPF0060 membrane protein Sca_1835, found in Staphylococcus carnosus (strain TM300).